A 361-amino-acid chain; its full sequence is Peptide chain release factor 1 (361 aa).

The residue at position 235 (Gln-235) is an N5-methylglutamine.

It belongs to the prokaryotic/mitochondrial release factor family. Methylated by PrmC. Methylation increases the termination efficiency of RF1.

The protein localises to the cytoplasm. Peptide chain release factor 1 directs the termination of translation in response to the peptide chain termination codons UAG and UAA. The sequence is that of Peptide chain release factor 1 from Rhodopseudomonas palustris (strain BisB18).